We begin with the raw amino-acid sequence, 141 residues long: uncharacterized protein (141 aa).

This sequence belongs to the peptidase C56 family.

This is an uncharacterized protein from Streptomyces lividans.